The chain runs to 54 residues: Small ribosomal subunit protein uS14 (54 aa).

Zn(2+)-binding residues include Cys-19, Cys-22, Cys-37, and Cys-40.

Belongs to the universal ribosomal protein uS14 family. Zinc-binding uS14 subfamily. Part of the 30S ribosomal subunit. Zn(2+) serves as cofactor.

Binds 16S rRNA, required for the assembly of 30S particles. The protein is Small ribosomal subunit protein uS14 of Sulfolobus acidocaldarius (strain ATCC 33909 / DSM 639 / JCM 8929 / NBRC 15157 / NCIMB 11770).